The sequence spans 715 residues: ATP-binding cassette sub-family B member 10, mitochondrial (715 aa).

The transit peptide at 1–82 directs the protein to the mitochondrion; sequence MRAPSARALL…SSGARRCWVL (82 aa). The Mitochondrial matrix segment spans residues 83 to 133; it reads AGPRAAHPLFARLQGAAATGVRDLGNDSQRRPAATGRSEVWKLLGLVRPER. A helical transmembrane segment spans residues 134 to 157; the sequence is GRLSAAVGFLAVSSVITMSAPFFL. The ABC transmembrane type-1 domain maps to 136-422; it reads LSAAVGFLAV…LSSFYSELMK (287 aa). Residues 158–178 are Mitochondrial intermembrane-facing; the sequence is GRIIDVIYTNPSEGYGDSLTR. Residues 179-201 form a helical membrane-spanning segment; that stretch reads LCAVLTCVFLCGAAANGIRVYLM. Topologically, residues 202–252 are mitochondrial matrix; the sequence is QSSGQSIVNRLRTSLFSSILRQEVAFFDKTRTGELINRLSSDTALLGRSVT. An N6-acetyllysine modification is found at Lys-230. The helical transmembrane segment at 253–275 threads the bilayer; it reads ENLSDGLRAGAQASVGVGMMFFV. Over 276 to 278 the chain is Mitochondrial intermembrane; sequence SPS. Residues 279-298 form a helical membrane-spanning segment; the sequence is LATFVLSVVPPISVLAVIYG. Residues 299–357 are Mitochondrial matrix-facing; it reads RYLRKLSKATQDSLAEATQLAEERIGNIRTIRAFGKEMTEVEKYTGRVDQLLQLAQKEA. The chain crosses the membrane as a helical span at residues 358–381; it reads LARAGFFGAAGLSGNLIVLSVLYK. Over 382 to 395 the chain is Mitochondrial intermembrane; that stretch reads GGLLMGSAHMTVGE. Residues 396–417 traverse the membrane as a helical segment; sequence LSSFLMYAFWVGLSIGGLSSFY. Residues 418-715 lie on the Mitochondrial matrix side of the membrane; it reads SELMKGLGAG…AEQFLEPARA (298 aa). The 240-residue stretch at 457–696 folds into the ABC transporter domain; sequence LEFRNVHFTY…PNGLYRKLMN (240 aa). 5 residues coordinate ATP: Gly-495, Gly-497, Lys-498, Ser-499, and Thr-500. Residue Ser-499 coordinates Mg(2+). Cys-547 carries the S-glutathionyl cysteine modification. Asp-623 serves as a coordination point for Mg(2+).

The protein belongs to the ABC transporter superfamily. ABCB family. Mitochondrial peptide exporter (TC 3.A.1.212) subfamily. As to quaternary structure, homodimer or homooligomer. Interacts with PAAT; this interaction regulates ABCB10. Interacts with SLC25A37; this interaction stabilizes SLC25A37 and enhances the function of SLC25A37 to import mitochondrial iron during erythroid differentiation. Interacts with FECH; this interaction may allow the formation of the oligomeric complex with SLC25A37. Forms a complex with ABCB7 and FECH, where a dimeric FECH bridges ABCB7 and ABCB10 homodimers; this complex may be required for cellular iron homeostasis, mitochondrial function and heme biosynthesis. As to expression, expressed at particularly high levels in fetal liver, and erythroid tissues of embryos and adults. Found also in adult bone marrow, liver and kidney, and at lower levels in heart, brain and spleen.

It localises to the mitochondrion inner membrane. The catalysed reaction is biliverdin IXalpha(in) + ATP + H2O = biliverdin IXalpha(out) + ADP + phosphate + H(+). Oxidized glutathione (GSSG) stimulates ATP hydrolysis without affecting ATP binding, whereas reduced glutathione (GSH) inhibits ATP binding and hydrolysis. ATP-dependent transporter located in the mitochondrial inner membrane that catalyzes the export of biliverdin from the mitochondrial matrix, and plays a crucial role in hemoglobin synthesis and antioxidative stress. Participates in the early step of the heme biosynthetic process during insertion of iron into protoporphyrin IX (PPIX). Involved in the stabilization of the iron transporter mitoferrin-1/SLC25A37. In addition may be involved in mitochondrial unfolded protein response (UPRmt) signaling pathway, although ABCB10 probably does not participate in peptide export from mitochondria. In Mus musculus (Mouse), this protein is ATP-binding cassette sub-family B member 10, mitochondrial.